The primary structure comprises 529 residues: DNA-binding protein (529 aa).

The segment covering 1–17 (MASREEEQRETTPERGR) has biased composition (basic and acidic residues). Disordered regions lie at residues 1–108 (MASR…VDSE) and 125–168 (PVLI…SEST). A compositionally biased stretch (basic residues) spans 129-139 (KHGKGGKRTVR). Positions 140–155 (RLNEDDPVARGMRTQE) are enriched in basic and acidic residues. Over residues 156–165 (EKEESSEAES) the composition is skewed to acidic residues. Y195 is subject to Phosphotyrosine; by host. Zn(2+) contacts are provided by C284 and H286. The interval 297–331 (IEMDVTSENGQRALKEQSSKAKIVKNRWGRNVVQI) is flexible loop. Residues C339, C355, C396, C398, C450, and C467 each contribute to the Zn(2+) site. Positions 513-529 (VSLPVAHSDARQNPFDF) are C-terminal arm, DBP binding.

It belongs to the adenoviridae E2A DNA-binding protein family. Homomultimerizes on viral ssDNA bound to pTP. Forms an initiation complex with viral polymerase, pTP and hosts NFIA and POU2F1/OCT1. Interacts with host SRCAP.

The protein localises to the host nucleus. Its function is as follows. Plays a role in the elongation phase of viral strand displacement replication by unwinding the template in an ATP-independent fashion, employing its capacity to form multimers. Also enhances the rate of initiation. Released from template upon second strand synthesis. Assembles in complex with viral pTP, viral pol, host NFIA and host POU2F1/OCT1 on viral origin of replication. Covers the whole ssDNA genome during synthesis. The complementary strand synthesis induces its release from DNA template. May inhibit cellular transcription mediated by the interaction between host SRCAP and CBP. The chain is DNA-binding protein from Human adenovirus C serotype 2 (HAdV-2).